The sequence spans 210 residues: Large ribosomal subunit protein bL25 (210 aa).

This sequence belongs to the bacterial ribosomal protein bL25 family. CTC subfamily. As to quaternary structure, part of the 50S ribosomal subunit; part of the 5S rRNA/L5/L18/L25 subcomplex. Contacts the 5S rRNA. Binds to the 5S rRNA independently of L5 and L18.

In terms of biological role, this is one of the proteins that binds to the 5S RNA in the ribosome where it forms part of the central protuberance. The protein is Large ribosomal subunit protein bL25 of Frankia casuarinae (strain DSM 45818 / CECT 9043 / HFP020203 / CcI3).